The primary structure comprises 522 residues: Cytochrome P450 26C1 (522 aa).

A helical membrane pass occupies residues 9-29 (LSVLGAAGTALLCAGLLLSLA). Cys459 contacts heme.

The protein belongs to the cytochrome P450 family. Requires heme as cofactor. In terms of tissue distribution, detected in most tissues at very low level.

The protein localises to the membrane. The catalysed reaction is an organic molecule + reduced [NADPH--hemoprotein reductase] + O2 = an alcohol + oxidized [NADPH--hemoprotein reductase] + H2O + H(+). It catalyses the reaction all-trans-retinoate + reduced [NADPH--hemoprotein reductase] + O2 = all-trans-4-hydroxyretinoate + oxidized [NADPH--hemoprotein reductase] + H2O + H(+). The enzyme catalyses all-trans-4-hydroxyretinoate + reduced [NADPH--hemoprotein reductase] + O2 = all-trans-4-oxoretinoate + oxidized [NADPH--hemoprotein reductase] + 2 H2O + H(+). It carries out the reaction 9-cis-retinoate + reduced [NADPH--hemoprotein reductase] + O2 = 9-cis-4-hydroxyretinoate + oxidized [NADPH--hemoprotein reductase] + H2O + H(+). The catalysed reaction is 9-cis-4-hydroxyretinoate + reduced [NADPH--hemoprotein reductase] + O2 = 9-cis-4-oxoretinoate + oxidized [NADPH--hemoprotein reductase] + 2 H2O + H(+). It catalyses the reaction all-trans-4-hydroxy-13,14-dihydroretinoate + reduced [NADPH--hemoprotein reductase] + O2 = all-trans-4-oxo-13,14-dihydroretinoate + oxidized [NADPH--hemoprotein reductase] + 2 H2O + H(+). The enzyme catalyses all-trans-13,14-dihydroretinoate + reduced [NADPH--hemoprotein reductase] + O2 = all-trans-4-hydroxy-13,14-dihydroretinoate + oxidized [NADPH--hemoprotein reductase] + H2O + H(+). In terms of biological role, a cytochrome P450 monooxygenase involved in the metabolism of retinoates (RAs), the active metabolites of vitamin A, and critical signaling molecules in animals. RAs exist as at least four different isomers: all-trans-RA (atRA), 9-cis-RA, 13-cis-RA, and 9,13-dicis-RA, where atRA is considered to be the biologically active isomer, although 9-cis-RA and 13-cis-RA also have activity. Catalyzes the oxidation of atRA primarily at C-4. Oxidation of atRA limits its biological activity and initiates a degradative process leading to its eventual elimination, thereby contributes to the regulation of atRA homeostasis and signaling. Able to metabolize other RAs such as 9-cis with high efficiency. Can oxidize all-trans-13,14-dihydroretinoate (DRA) to metabolites which could include all-trans-4-oxo-DRA, all-trans-4-hydroxy-DRA, all-trans-5,8-epoxy-DRA, and all-trans-18-hydroxy-DRA. Shares sequence similarity with other CYP26 family members, but has higher affinity to 9-cis-RA and is much less sensitive to the inhibitory effects of ketoconazole. In cooperation with Cyp26a1, contributes to the CNS patterning and the development of regions of higher visual acuity. This chain is Cytochrome P450 26C1 (CYP26C1), found in Homo sapiens (Human).